A 63-amino-acid polypeptide reads, in one-letter code: Prokaryotic ubiquitin-like protein Pup (63 aa).

Residues 1-11 show a composition bias toward basic and acidic residues; the sequence is MAQEQTRRGGG. Residues 1–36 form a disordered region; that stretch reads MAQEQTRRGGGGDDDEFTSSTSVGQERREKLTEETD. The interval 20-57 is ARC ATPase binding; sequence STSVGQERREKLTEETDDLLDEIDDVLEENAEDFVRAY. Residues 23–51 are a coiled coil; it reads VGQERREKLTEETDDLLDEIDDVLEENAE. A Deamidated glutamine modification is found at Gln63. Gln63 is covalently cross-linked (Isoglutamyl lysine isopeptide (Gln-Lys) (interchain with K-? in acceptor proteins)).

Belongs to the prokaryotic ubiquitin-like protein family. In terms of assembly, strongly interacts with the proteasome-associated ATPase ARC through a hydrophobic interface; the interacting region of Pup lies in its C-terminal half. There is one Pup binding site per ARC hexamer ring. Post-translationally, is modified by deamidation of its C-terminal glutamine to glutamate by the deamidase Dop, a prerequisite to the subsequent pupylation process.

It participates in protein degradation; proteasomal Pup-dependent pathway. Protein modifier that is covalently attached to lysine residues of substrate proteins, thereby targeting them for proteasomal degradation. The tagging system is termed pupylation. This is Prokaryotic ubiquitin-like protein Pup from Mycobacterium leprae (strain Br4923).